The primary structure comprises 304 residues: Ribonuclease Z (304 aa).

His-63, His-65, Asp-67, His-68, His-141, Asp-208, and His-266 together coordinate Zn(2+). Asp-67 serves as the catalytic Proton acceptor.

The protein belongs to the RNase Z family. As to quaternary structure, homodimer. It depends on Zn(2+) as a cofactor.

The enzyme catalyses Endonucleolytic cleavage of RNA, removing extra 3' nucleotides from tRNA precursor, generating 3' termini of tRNAs. A 3'-hydroxy group is left at the tRNA terminus and a 5'-phosphoryl group is left at the trailer molecule.. In terms of biological role, zinc phosphodiesterase, which displays some tRNA 3'-processing endonuclease activity. Probably involved in tRNA maturation, by removing a 3'-trailer from precursor tRNA. This is Ribonuclease Z from Chlamydia trachomatis serovar L2 (strain ATCC VR-902B / DSM 19102 / 434/Bu).